The sequence spans 358 residues: Putative KilA-N domain-containing protein 313L (358 aa).

The 110-residue stretch at 15–124 (NFYYGLFGDF…DKCNQIVIDF (110 aa)) folds into the KilA-N domain. Residues 126 to 245 (VVEFKEKEKE…VKLEISVEDR (120 aa)) are a coiled coil.

The protein belongs to the IIV-6 006L/238R/313L/468L family.

The polypeptide is Putative KilA-N domain-containing protein 313L (Acheta domesticus (House cricket)).